A 269-amino-acid chain; its full sequence is Formamidopyrimidine-DNA glycosylase (269 aa).

The Schiff-base intermediate with DNA role is filled by proline 2. The active-site Proton donor is the glutamate 3. The Proton donor; for beta-elimination activity role is filled by lysine 58. Histidine 91, arginine 110, and lysine 150 together coordinate DNA. The FPG-type zinc-finger motif lies at 235–269; it reads SVYGCENKTCHFCKSKIIKIVQNQRSTFYCRKCQT. Arginine 259 (proton donor; for delta-elimination activity) is an active-site residue.

This sequence belongs to the FPG family. Monomer. Zn(2+) serves as cofactor.

It carries out the reaction Hydrolysis of DNA containing ring-opened 7-methylguanine residues, releasing 2,6-diamino-4-hydroxy-5-(N-methyl)formamidopyrimidine.. It catalyses the reaction 2'-deoxyribonucleotide-(2'-deoxyribose 5'-phosphate)-2'-deoxyribonucleotide-DNA = a 3'-end 2'-deoxyribonucleotide-(2,3-dehydro-2,3-deoxyribose 5'-phosphate)-DNA + a 5'-end 5'-phospho-2'-deoxyribonucleoside-DNA + H(+). Involved in base excision repair of DNA damaged by oxidation or by mutagenic agents. Acts as a DNA glycosylase that recognizes and removes damaged bases. Has a preference for oxidized purines, such as 7,8-dihydro-8-oxoguanine (8-oxoG). Has AP (apurinic/apyrimidinic) lyase activity and introduces nicks in the DNA strand. Cleaves the DNA backbone by beta-delta elimination to generate a single-strand break at the site of the removed base with both 3'- and 5'-phosphates. This is Formamidopyrimidine-DNA glycosylase from Ruthia magnifica subsp. Calyptogena magnifica.